Consider the following 490-residue polypeptide: Tektin-3 (490 aa).

T7, T9, and T11 each carry an O-linked (GalNAc...) threonine glycan. Residues N41, N86, N111, and N276 are each glycosylated (N-linked (GlcNAc...) asparagine). A coiled-coil region spans residues 415 to 461; the sequence is MAQLRLVNEVYEVDETIQTLQQRLRDSEDTLQSLAHTKATLEHDLAV.

It belongs to the tektin family. Microtubule inner protein component of sperm flagellar doublet microtubules. Interacts with TEKT1, TEKT2, TEKT4 and TEKT5. Interacts with CCDC38. Post-translationally, N- and O-glycosylated. Ubiquitinated, leading to its degradation. Deubiquitinated by USP16, promoting its stability. In terms of processing, may be proteolytically processed during the epididymal transit of spermatozoa. Expressed preferentially in testis. Expressed predominantly in late pachytene spermatocytes and early round spermatids. Expressed in spermatozoa.

Its subcellular location is the cytoplasm. The protein resides in the cytoskeleton. The protein localises to the cilium axoneme. It localises to the flagellum axoneme. It is found in the cytoplasmic vesicle. Its subcellular location is the secretory vesicle. The protein resides in the acrosome outer membrane. Functionally, microtubule inner protein (MIP) part of the dynein-decorated doublet microtubules (DMTs) in cilia and flagellar axoneme. Forms filamentous polymers in the walls of ciliary and flagellar microtubules. Required for normal sperm mobility. The chain is Tektin-3 (Tekt3) from Mus musculus (Mouse).